Reading from the N-terminus, the 412-residue chain is Peptidase T (412 aa).

Histidine 78 serves as a coordination point for Zn(2+). Aspartate 80 is a catalytic residue. Aspartate 140 contributes to the Zn(2+) binding site. The active-site Proton acceptor is glutamate 173. Glutamate 174, aspartate 196, and histidine 379 together coordinate Zn(2+).

It belongs to the peptidase M20B family. Zn(2+) serves as cofactor.

Its subcellular location is the cytoplasm. It catalyses the reaction Release of the N-terminal residue from a tripeptide.. Cleaves the N-terminal amino acid of tripeptides. This Edwardsiella ictaluri (strain 93-146) protein is Peptidase T.